A 1135-amino-acid polypeptide reads, in one-letter code: Envelopment polyprotein (1135 aa).

An N-terminal signal peptide occupies residues 1-18 (MIMWGLLLTMILIDFGAS). Residues 19 to 495 (LRNVYDMKIE…ALLTTFCFGW (477 aa)) lie on the Lumenal side of the membrane. 11 disulfides stabilise this stretch: C29–C151, C63–C157, C109–C128, C133–C138, C175–C185, C210–C247, C234–C351, C376–C435, C380–C389, C405–C424, and C452–C475. An N-linked (GlcNAc...) asparagine; by host glycan is attached at N134. N-linked (GlcNAc...) asparagine; by host glycosylation is found at N235 and N347. A glycan (N-linked (GlcNAc...) asparagine; by host) is linked at N399. A helical transmembrane segment spans residues 496–516 (ILILSITLAVLVVLKFFAAIL). Residues 516-533 (LHNSSQENRFKIILRKIK) are binding to the ribonucleoprotein. Over 517–627 (HNSSQENRFK…LNLFRYKSRC (111 aa)) the chain is Cytoplasmic. 2 CCHC-type zinc fingers span residues 545–565 (CEVC…NLSC) and 570–591 (CPYC…YKVC). Binding to the ribonucleoprotein regions lie at residues 588-605 (YKVC…KKTI), 592-603 (QATHRFRDDLKK), and 611-625 (SPGC…RYKS). In terms of domain architecture, ITAM spans 611 to 634 (SPGCYRTLNLFRYKSRCYIFTVWV). 2 positions are modified to phosphotyrosine: Y615 and Y628. Positions 615–618 (YRTL) match the YxxL motif. Residues 628–648 (YIFTVWVTLLIIESIMWAASA) form a helical membrane-spanning segment. Over 649–1105 (SETVLEPSWN…EWITGIFNGN (457 aa)) the chain is Lumenal. Disulfide bonds link C735/C770, C739/C777, C751/C885, C765/C896, C780/C904, C806/C815, C823/C832, and C863/C867. The tract at residues 757–777 (FEYENNWGCNPADCPGIGTGC) is fusion loop. N928 is a glycosylation site (N-linked (GlcNAc...) asparagine; by host). 5 cysteine pairs are disulfide-bonded: C970/C1000, C993/C1045, C1010/C1015, C1046/C1051, and C1085/C1089. The helical transmembrane segment at 1106–1126 (WIVIVVLVFFFILSLILLSLL) threads the bilayer. The binding to the ribonucleoprotein stretch occupies residues 1122–1135 (LLSLLCPIRKHKRS). The Cytoplasmic portion of the chain corresponds to 1127-1135 (CPIRKHKRS).

It belongs to the hantavirus envelope glycoprotein family. Homodimer. Homotetramer; forms heterotetrameric Gn-Gc spikes in the pre-fusion conformation. Interacts (via C-terminus) with the nucleoprotein. Interacts with host TUFM; this interaction contributes to the virus-induced degradation of mitochondria by autophagy, which leads to degradation of host MAVS and inhibition of type I interferon (IFN) responses. Interacts with host MAP1LC3B; this interaction contributes to the virus-induced degradation of mitochondria by autophagy, which leads to degradation of host MAVS and inhibition of type I interferon (IFN) responses. In terms of assembly, homodimer. Homotetramer; forms heterotetrameric Gn-Gc spikes in the pre-fusion conformation. Homotrimer; forms homotrimer in the post-fusion conformation at acidic pH. Interacts (via C-terminus) with the nucleoprotein. In terms of processing, envelope polyprotein precursor is quickly cleaved in vivo just after synthesis, presumably by host signal peptidase.

The protein localises to the virion membrane. The protein resides in the host cell surface. It localises to the host Golgi apparatus membrane. Its subcellular location is the host endoplasmic reticulum membrane. It is found in the host mitochondrion. Forms homotetramers with glycoprotein C at the surface of the virion. Attaches the virion to host cell receptors including integrin ITGAV/ITGB3. This attachment induces virion internalization predominantly through clathrin-dependent endocytosis. Mediates the assembly and budding of infectious virus particles through its interaction with the nucleocapsid protein and the viral genome. May dysregulate normal immune and endothelial cell responses through an ITAM motif. Translocates to mitochondria, binds to host TUFM and recruits MAP1LC3B. These interactions induce mitochondrial autophagy and therefore destruction of host MAVS leading to inhibition of type I interferon (IFN) responses. Concomitant breakdown of glycoprotein N is apparently prevented by the nucleoprotein that may inhibit Gn-stimulated autophagosome-lysosome fusion. Interacts with the viral genomic RNA. Functionally, forms homotetramers with glycoprotein N at the surface of the virion. Attaches the virion to host cell receptors including integrin ITGAV/ITGB3. This attachment induces virion internalization predominantly through clathrin-dependent endocytosis. Class II fusion protein that promotes fusion of viral membrane with host endosomal membrane after endocytosis of the virion. The chain is Envelopment polyprotein (GP) from Dobrava-Belgrade orthohantavirus (DOBV).